A 287-amino-acid chain; its full sequence is MSAKIIDGKQVAQTIRNQVAAQVQQRLAQGKRAPGLAVILVGVDPASQVYVGSKRRACEEVGFISRSYDLDATASQEELLALIDKLNEDADVDGILVQLPLPAHCDTTQVLERIRPDKDVDGFHPYNVGRLAQRIPALRPCTPKGIMTLIEATGVKTHGLHAVVVGASNIVGRPMTLELLLAGCTTTTCHRFTQDLEDQVRRADLLVVAVGKPNFIPGEWIKPGALVIDVGINRLADGSLVGDVEFETARNHASFITPVPGGVGPMTVASLMENTLSACQDYHDNAQ.

Residues 166-168 (GAS) and Ile232 contribute to the NADP(+) site.

It belongs to the tetrahydrofolate dehydrogenase/cyclohydrolase family. Homodimer.

It carries out the reaction (6R)-5,10-methylene-5,6,7,8-tetrahydrofolate + NADP(+) = (6R)-5,10-methenyltetrahydrofolate + NADPH. The catalysed reaction is (6R)-5,10-methenyltetrahydrofolate + H2O = (6R)-10-formyltetrahydrofolate + H(+). It functions in the pathway one-carbon metabolism; tetrahydrofolate interconversion. Functionally, catalyzes the oxidation of 5,10-methylenetetrahydrofolate to 5,10-methenyltetrahydrofolate and then the hydrolysis of 5,10-methenyltetrahydrofolate to 10-formyltetrahydrofolate. In Aeromonas hydrophila subsp. hydrophila (strain ATCC 7966 / DSM 30187 / BCRC 13018 / CCUG 14551 / JCM 1027 / KCTC 2358 / NCIMB 9240 / NCTC 8049), this protein is Bifunctional protein FolD.